The primary structure comprises 985 residues: Ephrin type-A receptor 4-B (985 aa).

The signal sequence occupies residues 1–20; sequence MAGIVHGILFCGLFGLCWAV. Residues 21–547 lie on the Extracellular side of the membrane; the sequence is TGSRIYPASE…MIGEGTSPTV (527 aa). An Eph LBD domain is found at 30–209; sequence EVTLLDSRSV…FYKKCPLTVR (180 aa). Fibronectin type-III domains follow at residues 328-438 and 439-536; these read PPSA…TNQA and APST…TVPS. N-linked (GlcNAc...) asparagine glycosylation is found at asparagine 340 and asparagine 407. A helical membrane pass occupies residues 548–569; the sequence is LLVSVAGSIVLVVILIAAFVIS. Over 570–985 the chain is Cytoplasmic; that stretch reads RRRSKYSKAK…QQMQGRMVPV (416 aa). A phosphotyrosine; by autocatalysis mark is found at tyrosine 595 and tyrosine 601. A Protein kinase domain is found at 620–881; it reads IKIEKVIGVG…QIVSMLDKLI (262 aa). ATP contacts are provided by residues 626–634 and lysine 652; that span reads IGVGEFGEV. The Proton acceptor role is filled by aspartate 745. 2 positions are modified to phosphotyrosine; by autocatalysis: tyrosine 778 and tyrosine 927. One can recognise an SAM domain in the interval 910-974; that stretch reads SQVASVLDWL…LSSVQGMRTQ (65 aa). The short motif at 983–985 is the PDZ-binding element; the sequence is VPV.

This sequence belongs to the protein kinase superfamily. Tyr protein kinase family. Ephrin receptor subfamily. Localized expression in a subset of neural crest and neural tissues in embryos.

Its subcellular location is the cell membrane. The protein resides in the early endosome. It carries out the reaction L-tyrosyl-[protein] + ATP = O-phospho-L-tyrosyl-[protein] + ADP + H(+). Its function is as follows. Receptor tyrosine kinase which binds membrane-bound ephrin family ligands residing on adjacent cells, leading to contact-dependent bidirectional signaling into neighboring cells. The signaling pathway downstream of the receptor is referred to as forward signaling while the signaling pathway downstream of the ephrin ligand is referred to as reverse signaling. Highly promiscuous, it has the unique property among Eph receptors to bind and to be physiologically activated by both GPI-anchored ephrin-A and transmembrane ephrin-B ligands including EFNA1 and EFNB3. Upon activation by ephrin ligands, modulates cell morphology and integrin-dependent cell adhesion through regulation of the Rac, Rap and Rho GTPases activity. Plays an important role in the development of the nervous system controlling different steps of axonal guidance including the establishment of the corticospinal projections. This Xenopus laevis (African clawed frog) protein is Ephrin type-A receptor 4-B (epha4-b).